The following is a 210-amino-acid chain: Orotate phosphoribosyltransferase (210 aa).

Residues Arg94, Lys98, His100, and 120-128 (EDLISTGGS) contribute to the 5-phospho-alpha-D-ribose 1-diphosphate site. Ser124 is an orotate binding site.

This sequence belongs to the purine/pyrimidine phosphoribosyltransferase family. PyrE subfamily. Homodimer. Requires Mg(2+) as cofactor.

It catalyses the reaction orotidine 5'-phosphate + diphosphate = orotate + 5-phospho-alpha-D-ribose 1-diphosphate. It participates in pyrimidine metabolism; UMP biosynthesis via de novo pathway; UMP from orotate: step 1/2. Catalyzes the transfer of a ribosyl phosphate group from 5-phosphoribose 1-diphosphate to orotate, leading to the formation of orotidine monophosphate (OMP). This Halalkalibacterium halodurans (strain ATCC BAA-125 / DSM 18197 / FERM 7344 / JCM 9153 / C-125) (Bacillus halodurans) protein is Orotate phosphoribosyltransferase.